A 501-amino-acid polypeptide reads, in one-letter code: Bifunctional purine biosynthesis protein PurH (501 aa).

Residues 1 to 144 form the MGS-like domain; the sequence is MKKRALISVF…KNFQDVVVIS (144 aa).

This sequence belongs to the PurH family.

The enzyme catalyses (6R)-10-formyltetrahydrofolate + 5-amino-1-(5-phospho-beta-D-ribosyl)imidazole-4-carboxamide = 5-formamido-1-(5-phospho-D-ribosyl)imidazole-4-carboxamide + (6S)-5,6,7,8-tetrahydrofolate. It carries out the reaction IMP + H2O = 5-formamido-1-(5-phospho-D-ribosyl)imidazole-4-carboxamide. The protein operates within purine metabolism; IMP biosynthesis via de novo pathway; 5-formamido-1-(5-phospho-D-ribosyl)imidazole-4-carboxamide from 5-amino-1-(5-phospho-D-ribosyl)imidazole-4-carboxamide (10-formyl THF route): step 1/1. It functions in the pathway purine metabolism; IMP biosynthesis via de novo pathway; IMP from 5-formamido-1-(5-phospho-D-ribosyl)imidazole-4-carboxamide: step 1/1. This is Bifunctional purine biosynthesis protein PurH from Clostridium botulinum (strain Eklund 17B / Type B).